The following is a 156-amino-acid chain: Small ribosomal subunit protein uS7 (156 aa).

This sequence belongs to the universal ribosomal protein uS7 family. In terms of assembly, part of the 30S ribosomal subunit. Contacts proteins S9 and S11.

In terms of biological role, one of the primary rRNA binding proteins, it binds directly to 16S rRNA where it nucleates assembly of the head domain of the 30S subunit. Is located at the subunit interface close to the decoding center, probably blocks exit of the E-site tRNA. The polypeptide is Small ribosomal subunit protein uS7 (Acetivibrio thermocellus (strain ATCC 27405 / DSM 1237 / JCM 9322 / NBRC 103400 / NCIMB 10682 / NRRL B-4536 / VPI 7372) (Clostridium thermocellum)).